The primary structure comprises 349 residues: 4-hydroxythreonine-4-phosphate dehydrogenase (349 aa).

T135 is a binding site for substrate. A divalent metal cation is bound by residues H170, H215, and H276. Residues K284, N293, and R302 each contribute to the substrate site.

The protein belongs to the PdxA family. In terms of assembly, homodimer. It depends on a divalent metal cation as a cofactor.

The protein resides in the cytoplasm. The catalysed reaction is 4-(phosphooxy)-L-threonine + NAD(+) = 3-amino-2-oxopropyl phosphate + CO2 + NADH. It functions in the pathway cofactor biosynthesis; pyridoxine 5'-phosphate biosynthesis; pyridoxine 5'-phosphate from D-erythrose 4-phosphate: step 4/5. Catalyzes the NAD(P)-dependent oxidation of 4-(phosphooxy)-L-threonine (HTP) into 2-amino-3-oxo-4-(phosphooxy)butyric acid which spontaneously decarboxylates to form 3-amino-2-oxopropyl phosphate (AHAP). The sequence is that of 4-hydroxythreonine-4-phosphate dehydrogenase from Synechococcus sp. (strain JA-3-3Ab) (Cyanobacteria bacterium Yellowstone A-Prime).